Reading from the N-terminus, the 188-residue chain is Probable chorismate pyruvate-lyase (188 aa).

Residues Arg90, Leu128, and Glu175 each contribute to the substrate site.

It belongs to the UbiC family.

The protein localises to the cytoplasm. The catalysed reaction is chorismate = 4-hydroxybenzoate + pyruvate. Its pathway is cofactor biosynthesis; ubiquinone biosynthesis. Its function is as follows. Removes the pyruvyl group from chorismate, with concomitant aromatization of the ring, to provide 4-hydroxybenzoate (4HB) for the ubiquinone pathway. This chain is Probable chorismate pyruvate-lyase, found in Marinobacter nauticus (strain ATCC 700491 / DSM 11845 / VT8) (Marinobacter aquaeolei).